We begin with the raw amino-acid sequence, 1071 residues long: Carbamoyl phosphate synthase pyrimidine-specific large chain (1071 aa).

A carboxyphosphate synthetic domain region spans residues 1 to 401 (MPKRVDINKI…SLLKAVRSLE (401 aa)). ATP contacts are provided by Arg129, Arg169, Gly175, Gly176, Lys208, Ile210, Glu215, Gly241, Ile242, His243, Gln284, and Glu298. The ATP-grasp 1 domain occupies 133–327 (RTLMNELNEP…IAKLAAKIAV (195 aa)). Gln284, Glu298, and Asn300 together coordinate Mg(2+). Mn(2+)-binding residues include Gln284, Glu298, and Asn300. The interval 402-546 (ADVYHLELKD…YSTYEEENES (145 aa)) is oligomerization domain. Residues 547–929 (VVTDKKSVMV…ALYKALIASG (383 aa)) form a carbamoyl phosphate synthetic domain region. In terms of domain architecture, ATP-grasp 2 spans 671 to 861 (EQALGELGVP…MANLATKIIL (191 aa)). Residues Arg707, Arg746, Leu748, Glu752, Gly777, Val778, His779, Ser780, Gln820, and Glu832 each coordinate ATP. Mg(2+) is bound by residues Gln820, Glu832, and Asn834. Mn(2+) is bound by residues Gln820, Glu832, and Asn834. Positions 930–1071 (IQIPNYGSVL…NTNQEAAVTI (142 aa)) constitute an MGS-like domain. The segment at 930–1071 (IQIPNYGSVL…NTNQEAAVTI (142 aa)) is allosteric domain.

The protein belongs to the CarB family. In terms of assembly, composed of two chains; the small (or glutamine) chain promotes the hydrolysis of glutamine to ammonia, which is used by the large (or ammonia) chain to synthesize carbamoyl phosphate. Tetramer of heterodimers (alpha,beta)4. Interacts with BrxC. It depends on Mg(2+) as a cofactor. Mn(2+) serves as cofactor.

It carries out the reaction hydrogencarbonate + L-glutamine + 2 ATP + H2O = carbamoyl phosphate + L-glutamate + 2 ADP + phosphate + 2 H(+). The enzyme catalyses hydrogencarbonate + NH4(+) + 2 ATP = carbamoyl phosphate + 2 ADP + phosphate + 2 H(+). It functions in the pathway amino-acid biosynthesis; L-arginine biosynthesis; carbamoyl phosphate from bicarbonate: step 1/1. The protein operates within pyrimidine metabolism; UMP biosynthesis via de novo pathway; (S)-dihydroorotate from bicarbonate: step 1/3. Its function is as follows. Small subunit of the glutamine-dependent carbamoyl phosphate synthetase (CPSase). CPSase catalyzes the formation of carbamoyl phosphate from the ammonia moiety of glutamine, carbonate, and phosphate donated by ATP, constituting the first step of the biosynthetic pathway leading to pyrimidine nucleotides. The large subunit (synthetase) binds the substrates ammonia (free or transferred from glutamine from the small subunit), hydrogencarbonate and ATP and carries out an ATP-coupled ligase reaction, activating hydrogencarbonate by forming carboxy phosphate which reacts with ammonia to form carbamoyl phosphate. This chain is Carbamoyl phosphate synthase pyrimidine-specific large chain (pyrAB), found in Bacillus subtilis (strain 168).